Reading from the N-terminus, the 345-residue chain is NADPH dehydrogenase (345 aa).

Position 23 to 26 (23 to 26) interacts with FMN; it reads SPMC. Tyrosine 28 serves as a coordination point for substrate. FMN is bound by residues alanine 60 and glutamine 102. 164–167 is a substrate binding site; sequence HGAH. Residues arginine 215 and 307 to 308 contribute to the FMN site; that span reads GR.

This sequence belongs to the NADH:flavin oxidoreductase/NADH oxidase family. NamA subfamily. As to quaternary structure, homotetramer. The cofactor is FMN.

It catalyses the reaction A + NADPH + H(+) = AH2 + NADP(+). Functionally, catalyzes the reduction of the double bond of an array of alpha,beta-unsaturated aldehydes and ketones. It also reduces the nitro group of nitroester and nitroaromatic compounds. It could have a role in detoxification processes. In Bacillus thuringiensis (strain Al Hakam), this protein is NADPH dehydrogenase.